The sequence spans 219 residues: Interleukin-12 subunit alpha (219 aa).

The N-terminal stretch at 1-22 (MCPARSLLLVATLVLLDYLSLA) is a signal peptide. Asn-24, Asn-93, and Asn-107 each carry an N-linked (GlcNAc...) asparagine glycan. 3 cysteine pairs are disulfide-bonded: Cys-37–Cys-110, Cys-64–Cys-196, and Cys-85–Cys-123.

It belongs to the IL-6 superfamily. Heterodimer with IL12B; disulfide-linked. This heterodimer is known as interleukin IL-12. Heterodimer with EBI3/IL27B; not disulfide-linked. This heterodimer is known as interleukin IL-35. Interacts with NBR1; this interaction promotes IL-12 secretion.

The protein resides in the secreted. In terms of biological role, heterodimerizes with IL12B to form the IL-12 cytokine or with EBI3/IL27B to form the IL-35 cytokine. IL-12 is primarily produced by professional antigen-presenting cells (APCs) such as B-cells and dendritic cells (DCs) as well as macrophages and granulocytes and regulates T-cell and natural killer-cell responses, induces the production of interferon-gamma (IFN-gamma), favors the differentiation of T-helper 1 (Th1) cells and is an important link between innate resistance and adaptive immunity. Mechanistically, exerts its biological effects through a receptor composed of IL12R1 and IL12R2 subunits. Binding to the receptor results in the rapid tyrosine phosphorylation of a number of cellular substrates including the JAK family kinases TYK2 and JAK2. In turn, recruited STAT4 gets phosphorylated and translocates to the nucleus where it regulates cytokine/growth factor responsive genes. As part of IL-35, plays essential roles in maintaining the immune homeostasis of the liver microenvironment and also functions as an immune-suppressive cytokine. Mediates biological events through unconventional receptors composed of IL12RB2 and gp130/IL6ST heterodimers or homodimers. Signaling requires the transcription factors STAT1 and STAT4, which form a unique heterodimer that binds to distinct DNA sites. This Macaca mulatta (Rhesus macaque) protein is Interleukin-12 subunit alpha (IL12A).